Consider the following 383-residue polypeptide: Dual-specificity RNA methyltransferase RlmN (383 aa).

Residue Glu94 is the Proton acceptor of the active site. A Radical SAM core domain is found at 100–339; the sequence is DGDRATLCVS…VTVRRTRGDD (240 aa). The cysteines at positions 107 and 344 are disulfide-linked. Residues Cys114, Cys118, and Cys121 each coordinate [4Fe-4S] cluster. S-adenosyl-L-methionine contacts are provided by residues 168–169, Ser200, 222–224, and Asn301; these read GE and SLH. Cys344 acts as the S-methylcysteine intermediate in catalysis.

It belongs to the radical SAM superfamily. RlmN family. It depends on [4Fe-4S] cluster as a cofactor.

It is found in the cytoplasm. It carries out the reaction adenosine(2503) in 23S rRNA + 2 reduced [2Fe-2S]-[ferredoxin] + 2 S-adenosyl-L-methionine = 2-methyladenosine(2503) in 23S rRNA + 5'-deoxyadenosine + L-methionine + 2 oxidized [2Fe-2S]-[ferredoxin] + S-adenosyl-L-homocysteine. The catalysed reaction is adenosine(37) in tRNA + 2 reduced [2Fe-2S]-[ferredoxin] + 2 S-adenosyl-L-methionine = 2-methyladenosine(37) in tRNA + 5'-deoxyadenosine + L-methionine + 2 oxidized [2Fe-2S]-[ferredoxin] + S-adenosyl-L-homocysteine. In terms of biological role, specifically methylates position 2 of adenine 2503 in 23S rRNA and position 2 of adenine 37 in tRNAs. m2A2503 modification seems to play a crucial role in the proofreading step occurring at the peptidyl transferase center and thus would serve to optimize ribosomal fidelity. The sequence is that of Dual-specificity RNA methyltransferase RlmN from Aliivibrio salmonicida (strain LFI1238) (Vibrio salmonicida (strain LFI1238)).